The sequence spans 284 residues: Phospholipid phosphatase 1 (284 aa).

Over 1 to 6 the chain is Cytoplasmic; it reads MFDKTR. The short motif at 5–7 is the PDZ-binding; involved in localization to the apical cell membrane element; the sequence is TRL. A helical transmembrane segment spans residues 7-27; it reads LPYVALDVLCVLLAGLPFAIL. At 28-53 the chain is on the extracellular side; the sequence is TSRHTPFQRGVFCNDESIKYPYKEDT. The chain crosses the membrane as a helical span at residues 54-74; the sequence is IPYALLGGIIIPFSIIVIILG. Residues 75–94 lie on the Cytoplasmic side of the membrane; sequence ETLSVYCNLLHSNSFIRNNY. A helical membrane pass occupies residues 95–115; sequence IATIYKAIGTFLFGAAASQSL. Residues 116 to 164 lie on the Extracellular side of the membrane; sequence TDIAKYSIGRLRPHFLDVCDPDWSKINCSDGYIEYYICRGNAERVKEGR. Residues 120 to 128 are phosphatase sequence motif I; the sequence is KYSIGRLRP. The N-linked (GlcNAc...) asparagine glycan is linked to N142. Residues 165-185 traverse the membrane as a helical segment; that stretch reads LSFYSGHSSFSMYCMLFVALY. Residues 168–171 are phosphatase sequence motif II; sequence YSGH. H171 acts as the Proton donors in catalysis. The Cytoplasmic segment spans residues 186–199; it reads LQARMKGDWARLLR. The chain crosses the membrane as a helical span at residues 200 to 220; sequence PTLQFGLVAVSIYVGLSRVSD. Residues 216 to 227 are phosphatase sequence motif III; the sequence is SRVSDYKHHWSD. Residues 221-229 are Extracellular-facing; the sequence is YKHHWSDVL. H223 acts as the Nucleophile in catalysis. The helical transmembrane segment at 230 to 250 threads the bilayer; that stretch reads TGLIQGALVAILVAVYVSDFF. At 251-284 the chain is on the cytoplasmic side; the sequence is KERTSFKERKEEDSHTTLHETPTTGNHYPSNHQP. Residues 260-284 are disordered; that stretch reads KEEDSHTTLHETPTTGNHYPSNHQP. A compositionally biased stretch (polar residues) spans 269–284; it reads HETPTTGNHYPSNHQP.

This sequence belongs to the PA-phosphatase related phosphoesterase family. In terms of assembly, forms functional homodimers and homooligomers that are not required for substrate recognition and catalytic activity. Can also form heterooligomers with PLPP2 and PLPP3. In terms of processing, N-glycosylated. N-linked sugars are of the complex type. N-glycosylation is not required for the phosphatase activity. In terms of tissue distribution, widely expressed with highest expression found in prostate. Found to be down-regulated in colon adenocarcinomas. Predominant in kidney, lung, placenta and liver. As to expression, predominant in heart and pancreas.

It localises to the cell membrane. The protein localises to the apical cell membrane. It is found in the membrane raft. The protein resides in the membrane. Its subcellular location is the caveola. It carries out the reaction a 1,2-diacyl-sn-glycero-3-phosphate + H2O = a 1,2-diacyl-sn-glycerol + phosphate. The catalysed reaction is 1,2-dihexadecanoyl-sn-glycero-3-phosphate + H2O = 1,2-dihexadecanoyl-sn-glycerol + phosphate. It catalyses the reaction 1,2-di-(9Z-octadecenoyl)-sn-glycero-3-phosphate + H2O = 1,2-di-(9Z-octadecenoyl)-sn-glycerol + phosphate. The enzyme catalyses a monoacyl-sn-glycero-3-phosphate + H2O = a monoacylglycerol + phosphate. It carries out the reaction (9Z)-octadecenoyl-sn-glycero-3-phosphate + H2O = (9Z-octadecenoyl)-glycerol + phosphate. The catalysed reaction is a 1-acyl-sn-glycero-3-phosphate + H2O = a 1-acyl-sn-glycerol + phosphate. It catalyses the reaction 1-(9Z-octadecenoyl)-sn-glycero-3-phosphate + H2O = 1-(9Z-octadecenoyl)-sn-glycerol + phosphate. The enzyme catalyses a 1,2-diacyl-sn-glycerol 3-diphosphate + H2O = a 1,2-diacyl-sn-glycero-3-phosphate + phosphate + H(+). It carries out the reaction sphing-4-enine 1-phosphate + H2O = sphing-4-enine + phosphate. The catalysed reaction is an N-acylsphing-4-enine 1-phosphate + H2O = an N-acylsphing-4-enine + phosphate. It catalyses the reaction N-(octanoyl)-sphing-4-enine-1-phosphate + H2O = N-octanoylsphing-4-enine + phosphate. The enzyme catalyses N-(9Z-octadecenoyl)-ethanolamine phosphate + H2O = N-(9Z-octadecenoyl) ethanolamine + phosphate. It carries out the reaction 1-hexadecanoyl-2-(9Z-octadecenoyl)-sn-glycero-3-phosphate + H2O = 1-hexadecanoyl-2-(9Z-octadecenoyl)-sn-glycerol + phosphate. The protein operates within lipid metabolism; phospholipid metabolism. With respect to regulation, magnesium-independent phospholipid phosphatase. Insensitive to N-ethylmaleimide. Inhibited by sphingosine, zinc ions and modestly by propanolol. Inhibited by vanadate. Magnesium-independent phospholipid phosphatase of the plasma membrane that catalyzes the dephosphorylation of a variety of glycerolipid and sphingolipid phosphate esters including phosphatidate/PA, lysophosphatidate/LPA, diacylglycerol pyrophosphate/DGPP, sphingosine 1-phosphate/S1P and ceramide 1-phosphate/C1P. Also acts on N-oleoyl ethanolamine phosphate/N-(9Z-octadecenoyl)-ethanolamine phosphate, a potential physiological compound. Through its extracellular phosphatase activity allows both the hydrolysis and the cellular uptake of these bioactive lipid mediators from the milieu, regulating signal transduction in different cellular processes. It is for instance essential for the extracellular hydrolysis of S1P and subsequent conversion into intracellular S1P. Involved in the regulation of inflammation, platelets activation, cell proliferation and migration among other processes. May also have an intracellular activity to regulate phospholipid-mediated signaling pathways. The polypeptide is Phospholipid phosphatase 1 (Homo sapiens (Human)).